A 108-amino-acid polypeptide reads, in one-letter code: Phosphoribosyl-ATP pyrophosphatase (108 aa).

It belongs to the PRA-PH family.

The protein localises to the cytoplasm. The enzyme catalyses 1-(5-phospho-beta-D-ribosyl)-ATP + H2O = 1-(5-phospho-beta-D-ribosyl)-5'-AMP + diphosphate + H(+). Its pathway is amino-acid biosynthesis; L-histidine biosynthesis; L-histidine from 5-phospho-alpha-D-ribose 1-diphosphate: step 2/9. The protein is Phosphoribosyl-ATP pyrophosphatase of Geobacter sulfurreducens (strain ATCC 51573 / DSM 12127 / PCA).